The chain runs to 113 residues: Large ribosomal subunit protein uL24 (113 aa).

This sequence belongs to the universal ribosomal protein uL24 family. Part of the 50S ribosomal subunit.

One of two assembly initiator proteins, it binds directly to the 5'-end of the 23S rRNA, where it nucleates assembly of the 50S subunit. Functionally, one of the proteins that surrounds the polypeptide exit tunnel on the outside of the subunit. In Rickettsia prowazekii (strain Madrid E), this protein is Large ribosomal subunit protein uL24.